The following is a 251-amino-acid chain: Hydroxyacylglutathione hydrolase (251 aa).

The Zn(2+) site is built by His53, His55, Asp57, His58, His110, Asp127, and His165.

Belongs to the metallo-beta-lactamase superfamily. Glyoxalase II family. As to quaternary structure, monomer. Zn(2+) is required as a cofactor.

It carries out the reaction an S-(2-hydroxyacyl)glutathione + H2O = a 2-hydroxy carboxylate + glutathione + H(+). The protein operates within secondary metabolite metabolism; methylglyoxal degradation; (R)-lactate from methylglyoxal: step 2/2. Its function is as follows. Thiolesterase that catalyzes the hydrolysis of S-D-lactoyl-glutathione to form glutathione and D-lactic acid. This is Hydroxyacylglutathione hydrolase from Pectobacterium carotovorum subsp. carotovorum (strain PC1).